The sequence spans 393 residues: Methylthioribose kinase (393 aa).

Residues N38, K53, and 107–109 (EDL) each bind ATP. D225 contributes to the substrate binding site. Position 242–244 (242–244 (DPE)) interacts with ATP. R332 contributes to the substrate binding site.

It belongs to the methylthioribose kinase family. As to quaternary structure, homodimer.

It catalyses the reaction 5-(methylsulfanyl)-D-ribose + ATP = 5-(methylsulfanyl)-alpha-D-ribose 1-phosphate + ADP + H(+). Its pathway is amino-acid biosynthesis; L-methionine biosynthesis via salvage pathway; S-methyl-5-thio-alpha-D-ribose 1-phosphate from S-methyl-5'-thioadenosine (hydrolase route): step 2/2. Its function is as follows. Catalyzes the phosphorylation of methylthioribose into methylthioribose-1-phosphate. This is Methylthioribose kinase from Bacillus anthracis (strain A0248).